Consider the following 118-residue polypeptide: Large ribosomal subunit protein bL19 (118 aa).

It belongs to the bacterial ribosomal protein bL19 family.

This protein is located at the 30S-50S ribosomal subunit interface and may play a role in the structure and function of the aminoacyl-tRNA binding site. This Nautilia profundicola (strain ATCC BAA-1463 / DSM 18972 / AmH) protein is Large ribosomal subunit protein bL19.